Reading from the N-terminus, the 343-residue chain is MPINCKSQCGNRAALKRPKTGDALCKECFFAAFEAEIHHTISSSNLFRRGEKVAVAASGGKDSTVLAHVLKLLNERHNYGLELVLLSIDEGITGYRDDSLETVKQNRDDYQMPLKILSYEELYGWTMDRIVAQIGRSNNCTFCGVFRRQALDRGAKLLGVDSIATGHNADDIAETVLMNVLRGDTARLRRCTSIRTGGGEDTIPRVKPLKYSYEKEIVMYAHYKKLVYFSTECVFAPNAYRGHARAFLKDLEKVRPSVIMDIIYSGEQLRFKDTVKKPERGICTRCGFVSSQQPCKACVLLEGLNRGLPKLGIGKKSKGERMIAKQDQELALRERANLVKNDF.

The protein belongs to the TtcA family. CTU1/NCS6/ATPBD3 subfamily.

Its subcellular location is the cytoplasm. It functions in the pathway tRNA modification; 5-methoxycarbonylmethyl-2-thiouridine-tRNA biosynthesis. Its function is as follows. Plays a central role in 2-thiolation of mcm(5)S(2)U at tRNA wobble positions of tRNA(Lys), tRNA(Glu) and tRNA(Gln). Directly binds tRNAs and probably acts by catalyzing adenylation of tRNAs, an intermediate required for 2-thiolation. It is unclear whether it acts as a sulfurtransferase that transfers sulfur from thiocarboxylated URM1 onto the uridine of tRNAs at wobble position. The protein is Cytoplasmic tRNA 2-thiolation protein 1 of Drosophila erecta (Fruit fly).